A 485-amino-acid polypeptide reads, in one-letter code: Proline--tRNA ligase (485 aa).

The protein belongs to the class-II aminoacyl-tRNA synthetase family. ProS type 3 subfamily. In terms of assembly, homodimer.

Its subcellular location is the cytoplasm. It catalyses the reaction tRNA(Pro) + L-proline + ATP = L-prolyl-tRNA(Pro) + AMP + diphosphate. Catalyzes the attachment of proline to tRNA(Pro) in a two-step reaction: proline is first activated by ATP to form Pro-AMP and then transferred to the acceptor end of tRNA(Pro). This is Proline--tRNA ligase from Methanopyrus kandleri (strain AV19 / DSM 6324 / JCM 9639 / NBRC 100938).